Consider the following 571-residue polypeptide: Carboxylesterase 3B (571 aa).

An N-terminal signal peptide occupies residues 1–31 (MTNMRTMIPAGSSVLVWVTCLLLAFVTTVTG). C100 and C127 are oxidised to a cystine. The active-site Acyl-ester intermediate is the S232. The cysteines at positions 284 and 295 are disulfide-linked. A glycan (N-linked (GlcNAc...) asparagine) is linked at N311. Residues E347 and H460 each act as charge relay system in the active site. Residues 568–571 (PEEL) carry the Prevents secretion from ER motif.

Belongs to the type-B carboxylesterase/lipase family.

It localises to the endoplasmic reticulum lumen. The catalysed reaction is a carboxylic ester + H2O = an alcohol + a carboxylate + H(+). Its function is as follows. Involved in the detoxification of xenobiotics and in the activation of ester and amide prodrugs. This chain is Carboxylesterase 3B (Ces3b), found in Mus musculus (Mouse).